The sequence spans 190 residues: Elongation factor P (190 aa).

Belongs to the elongation factor P family.

It is found in the cytoplasm. The protein operates within protein biosynthesis; polypeptide chain elongation. Functionally, involved in peptide bond synthesis. Stimulates efficient translation and peptide-bond synthesis on native or reconstituted 70S ribosomes in vitro. Probably functions indirectly by altering the affinity of the ribosome for aminoacyl-tRNA, thus increasing their reactivity as acceptors for peptidyl transferase. This chain is Elongation factor P, found in Pseudomonas fluorescens (strain SBW25).